Consider the following 559-residue polypeptide: Neutral amino acid transporter 9 (559 aa).

Over 1-118 (MANVDSDSRH…YTEGYRKNTS (118 aa)) the chain is Cytoplasmic. Residues 119–139 (LVTIFMIWNTMMGTSILSIPW) traverse the membrane as a helical segment. An important for arginine binding and amino acid transport region spans residues 128-133 (TMMGTS). Ser133 lines the arginine pocket. At 140–145 (GIKQAG) the chain is on the lumenal side. Residues 146 to 166 (FTTGMCVIVLMGLLTLYCCYR) form a helical membrane-spanning segment. At 167 to 197 (VVKSRSMIVTSDTTTWEYPDVCKHYFGSFGQ) the chain is on the cytoplasmic side. The chain crosses the membrane as a helical span at residues 198-224 (WSSLLFSLVSLIGAMIVYWVLMSNFLF). Over 225–281 (NTGKFIFNFIHHINDTDTVLSTNNSSPVICPSAGSGHPDNSSMIFYNSDTEVRLFER) the chain is Lumenal. Residues Asn238, Asn247, and Asn264 are each glycosylated (N-linked (GlcNAc...) asparagine). Cys254 and Cys422 form a disulfide bridge. The chain crosses the membrane as a helical span at residues 282–298 (WWDKSKTVPFYLIGLLL). Topologically, residues 299-307 (PLLNFKSPS) are cytoplasmic. A helical transmembrane segment spans residues 308 to 332 (FFSKFNILGTVSVLYLIFIVTLKAI). Residues 333-354 (RLGFHLEFHWFAPTEFFVPEIR) are Lumenal-facing. The helical transmembrane segment at 355-375 (AQFPQLTGVLTLAFFIHNCII) threads the bilayer. At 376 to 392 (TLLKNNKNQENNVRDLC) the chain is on the cytoplasmic side. The chain crosses the membrane as a helical span at residues 393 to 413 (IAYMLVTLTYLYIGVLVFASF). The Lumenal segment spans residues 414–435 (PSPPLPKDCIEQNFLDNFPSSD). The chain crosses the membrane as a helical span at residues 436 to 456 (TLSFIARICLLFQMMTVYPLL). The CARC motif signature appears at 442–452 (RICLLFQMMTV). The short motif at 455-461 (LLGYLAR) is the CRAC motif element. Over 457–477 (GYLARVQLLGHIFGDIYPSIF) the chain is Cytoplasmic. The helical transmembrane segment at 478-498 (HVLILNLIIVGAGVTMACFYP) threads the bilayer. Residues 499-505 (NIGGIIR) lie on the Lumenal side of the membrane. Residues 506–526 (YSGAACGLAFVFIYPSLIYIL) form a helical membrane-spanning segment. Residues 527-538 (SQHQEERLTWPK) are Cytoplasmic-facing. The chain crosses the membrane as a helical span at residues 539–559 (LVFHIIIIILGLANLIAQFFM).

Belongs to the amino acid/polyamine transporter 2 family. SLC38A9 subfamily. Associated component of the Ragulator complex (composed of LAMTOR1, LAMTOR2, LAMTOR3, LAMTOR4 and LAMTOR5). Associated component of the Rag GTPases heterodimers (composed of RRAGA, RRAGB, RRAGC and RRAGD); this interaction is independent of the Ragulator complex but depends on the nucleotide loading state of the Rag GTPase heterodimer. Interacts with TM4SF5. Interacts with NPC1; this interaction inhibits cholesterol-mediated mTORC1 activation via its sterol transport activity. In terms of processing, glycosylated.

The protein resides in the lysosome membrane. The protein localises to the late endosome membrane. It carries out the reaction L-leucine(in) = L-leucine(out). The enzyme catalyses L-tyrosine(in) = L-tyrosine(out). It catalyses the reaction L-glutamine(out) = L-glutamine(in). The catalysed reaction is L-asparagine(out) = L-asparagine(in). In terms of biological role, lysosomal amino acid transporter involved in the activation of mTORC1 in response to amino acid levels. Probably acts as an amino acid sensor of the Rag GTPases and Ragulator complexes, 2 complexes involved in amino acid sensing and activation of mTORC1, a signaling complex promoting cell growth in response to growth factors, energy levels, and amino acids. Following activation by amino acids, the Ragulator and Rag GTPases function as a scaffold recruiting mTORC1 to lysosomes where it is in turn activated. SLC38A9 mediates transport of amino acids with low capacity and specificity with a slight preference for polar amino acids. Acts as an arginine sensor. Following activation by arginine binding, mediates transport of L-glutamine, leucine and tyrosine with high efficiency, and is required for the efficient utilization of these amino acids after lysosomal protein degradation. However, the transport mechanism is not well defined and the role of sodium is not clear. Can disassemble the lysosomal folliculin complex (LFC), and thereby triggers GAP activity of FLCN:FNIP2 toward RRAGC. Acts as an cholesterol sensor that conveys increases in lysosomal cholesterol, leading to lysosomal recruitment and activation of mTORC1 via the Rag GTPases. Guanine exchange factor (GEF) that, upon arginine binding, stimulates GDP release from RRAGA and therefore activates the Rag GTPase heterodimer and the mTORC1 pathway in response to nutrient sufficiency. This is Neutral amino acid transporter 9 from Rattus norvegicus (Rat).